Reading from the N-terminus, the 124-residue chain is Fluoride-specific ion channel FluC (124 aa).

3 consecutive transmembrane segments (helical) span residues 20–40, 60–80, and 102–122; these read LLSI…TLLV, ISPE…TTFS, and VLLN…LIFS. Residues G74 and T77 each contribute to the Na(+) site.

This sequence belongs to the fluoride channel Fluc/FEX (TC 1.A.43) family.

It localises to the cell inner membrane. The catalysed reaction is fluoride(in) = fluoride(out). With respect to regulation, na(+) is not transported, but it plays an essential structural role and its presence is essential for fluoride channel function. Fluoride-specific ion channel. Important for reducing fluoride concentration in the cell, thus reducing its toxicity. The polypeptide is Fluoride-specific ion channel FluC (Shewanella frigidimarina (strain NCIMB 400)).